A 637-amino-acid chain; its full sequence is Phosphomethylpyrimidine synthase (637 aa).

Substrate contacts are provided by residues Asn-242, Met-271, Tyr-300, His-336, 356–358 (SRG), 397–400 (DGLR), and Glu-436. His-440 lines the Zn(2+) pocket. Residue Tyr-463 participates in substrate binding. His-504 provides a ligand contact to Zn(2+). Residues Cys-584, Cys-587, and Cys-592 each contribute to the [4Fe-4S] cluster site.

It belongs to the ThiC family. Homodimer. It depends on [4Fe-4S] cluster as a cofactor.

It carries out the reaction 5-amino-1-(5-phospho-beta-D-ribosyl)imidazole + S-adenosyl-L-methionine = 4-amino-2-methyl-5-(phosphooxymethyl)pyrimidine + CO + 5'-deoxyadenosine + formate + L-methionine + 3 H(+). It functions in the pathway cofactor biosynthesis; thiamine diphosphate biosynthesis. Catalyzes the synthesis of the hydroxymethylpyrimidine phosphate (HMP-P) moiety of thiamine from aminoimidazole ribotide (AIR) in a radical S-adenosyl-L-methionine (SAM)-dependent reaction. This is Phosphomethylpyrimidine synthase from Janthinobacterium sp. (strain Marseille) (Minibacterium massiliensis).